Consider the following 109-residue polypeptide: Large ribosomal subunit protein P1C (109 aa).

Residues Ala68 to Glu83 are compositionally biased toward low complexity. Residues Ala68–Asp109 form a disordered region. Residues Lys94–Met103 are compositionally biased toward acidic residues. Phosphoserine is present on Ser99.

It belongs to the eukaryotic ribosomal protein P1/P2 family. In terms of assembly, component of the large ribosomal subunit (LSU). Mature yeast ribosomes consist of a small (40S) and a large (60S) subunit. The 40S small subunit contains 1 molecule of ribosomal RNA (18S rRNA) and at least 33 different proteins. The large 60S subunit contains 3 rRNA molecules (25S, 5.8S and 5S rRNA) and at least 46 different proteins. The acidic ribosomal P-proteins form the stalk structure of the 60S subunit. They are organized as a pentameric complex in which uL10/P0 interacts with 2 heterodimers of P1 and P2 proteins.

The protein localises to the cytoplasm. Component of the ribosome, a large ribonucleoprotein complex responsible for the synthesis of proteins in the cell. The small ribosomal subunit (SSU) binds messenger RNAs (mRNAs) and translates the encoded message by selecting cognate aminoacyl-transfer RNA (tRNA) molecules. The large subunit (LSU) contains the ribosomal catalytic site termed the peptidyl transferase center (PTC), which catalyzes the formation of peptide bonds, thereby polymerizing the amino acids delivered by tRNAs into a polypeptide chain. The nascent polypeptides leave the ribosome through a tunnel in the LSU and interact with protein factors that function in enzymatic processing, targeting, and the membrane insertion of nascent chains at the exit of the ribosomal tunnel. The chain is Large ribosomal subunit protein P1C (rpp103) from Schizosaccharomyces pombe (strain 972 / ATCC 24843) (Fission yeast).